We begin with the raw amino-acid sequence, 356 residues long: DNA polymerase IV (356 aa).

A UmuC domain is found at I7 to G187. Positions 11 and 105 each coordinate Mg(2+). E106 is a catalytic residue.

The protein belongs to the DNA polymerase type-Y family. As to quaternary structure, monomer. It depends on Mg(2+) as a cofactor.

It is found in the cytoplasm. The catalysed reaction is DNA(n) + a 2'-deoxyribonucleoside 5'-triphosphate = DNA(n+1) + diphosphate. Its function is as follows. Poorly processive, error-prone DNA polymerase involved in untargeted mutagenesis. Copies undamaged DNA at stalled replication forks, which arise in vivo from mismatched or misaligned primer ends. These misaligned primers can be extended by PolIV. Exhibits no 3'-5' exonuclease (proofreading) activity. May be involved in translesional synthesis, in conjunction with the beta clamp from PolIII. The polypeptide is DNA polymerase IV (Stenotrophomonas maltophilia (strain R551-3)).